A 26-amino-acid polypeptide reads, in one-letter code: Thrombopoietin (26 aa).

It belongs to the EPO/TPO family.

It is found in the secreted. Lineage-specific cytokine affecting the proliferation and maturation of megakaryocytes from their committed progenitor cells. It acts at a late stage of megakaryocyte development. It may be the major physiological regulator of circulating platelets. The chain is Thrombopoietin (THPO) from Sus scrofa (Pig).